The sequence spans 106 residues: Transcriptional and immune response regulator (106 aa).

Monomer. Interacts with NOTCH2 (via ANK repeats), the interaction inhibits the nuclear translocation of NOTCH2 N2ICD. Interacts (C-terminus) with CBY1 (C-terminus), TCIM competes with CTNNB1 for the interaction with CBY1.

The protein localises to the cytoplasm. Its subcellular location is the nucleus. The protein resides in the nucleolus. It localises to the nucleus speckle. Functionally, seems to be involved in the regulation of cell growth an differentiation, may play different and opposite roles depending on the tissue or cell type. May enhance the WNT-CTNNB1 pathway by relieving antagonistic activity of CBY1. Enhances the proliferation of follicular dendritic cells. Plays a role in the mitogen-activated MAPK2/3 signaling pathway, positively regulates G1-to-S-phase transition of the cell cycle. In endothelial cells, enhances key inflammatory mediators and inflammatory response through the modulation of NF-kappaB transcriptional regulatory activity. Involved in the regulation of heat shock response, seems to play a positive feedback with HSF1 to modulate heat-shock downstream gene expression. Plays a role in the regulation of hematopoiesis even if the mechanisms are unknown. In cancers such as thyroid or lung cancer, it has been described as promoter of cell proliferation, G1-to-S-phase transition and inhibitor of apoptosis. However, it negatively regulates self-renewal of liver cancer cells via suppresion of NOTCH2 signaling. This chain is Transcriptional and immune response regulator (TCIM), found in Bos taurus (Bovine).